The chain runs to 91 residues: RNA-binding protein Hfq (91 aa).

One can recognise a Sm domain in the interval 9–68; the sequence is DPYLNALRRERIPVSIYLVNGIKLQGQIESFDQFVILLKNTVNQMVYKHAISTVVPARSV. The segment at 68–91 is disordered; it reads VSHHNNNHHTTPTEAVENVETQAE.

The protein belongs to the Hfq family. As to quaternary structure, homohexamer.

Functionally, RNA chaperone that binds small regulatory RNA (sRNAs) and mRNAs to facilitate mRNA translational regulation in response to envelope stress, environmental stress and changes in metabolite concentrations. Also binds with high specificity to tRNAs. The chain is RNA-binding protein Hfq from Haemophilus influenzae (strain 86-028NP).